The sequence spans 343 residues: Major capsid protein VP1 (343 aa).

The protein belongs to the polyomaviruses coat protein VP1 family. Homomultimer; disulfide-linked. The virus capsid is composed of 72 icosahedral units, each one composed of five disulfide-linked copies of VP1. Interacts with minor capsid proteins VP2 and VP3.

It is found in the virion. It localises to the host nucleus. Functionally, forms an icosahedral capsid with a T=7 symmetry and a 46-48 nm diameter. The capsid is composed of 72 pentamers linked to each other by disulfide bonds and associated with VP2 or VP3 proteins. Interacts with sialic acids on the cell surface to provide virion attachment to target cell. Once attached, the virion is internalized by endocytosis and traffics to the endoplasmic reticulum. Inside the endoplasmic reticulum, the protein folding machinery isomerizes VP1 interpentamer disulfide bonds, thereby triggering initial uncoating. Next, the virion uses the endoplasmic reticulum-associated degradation machinery to probably translocate in the cytosol before reaching the nucleus. Nuclear entry of the viral DNA involves the selective exposure and importin recognition of VP2/Vp3 nuclear localization signal. In late phase of infection, neo-synthesized VP1 encapsulates replicated genomic DNA in the nucleus, and participates in rearranging nucleosomes around the viral DNA. This Psittacidae (parrots) protein is Major capsid protein VP1.